Consider the following 158-residue polypeptide: C-type lectin galactose-binding isoform (158 aa).

Residues Met-1–Gly-20 form the signal peptide. 3 disulfide bridges follow: Cys-26-Cys-37, Cys-54-Cys-154, and Cys-129-Cys-146. One can recognise a C-type lectin domain in the interval Lys-33–Gln-155. Positions 119, 121, 127, 142, and 143 each coordinate Ca(2+). The short motif at Gln-119–Asp-121 is the Galactose-binding element.

Belongs to the true venom lectin family. In terms of assembly, homodimer; disulfide-linked. As to expression, expressed by the venom gland.

It localises to the secreted. Functionally, galactose-binding lectin that binds to and agglutinates erythrocytes in a calcium-dependent manner. The chain is C-type lectin galactose-binding isoform from Hoplocephalus stephensii (Stephens's banded snake).